A 173-amino-acid polypeptide reads, in one-letter code: Calcineurin subunit B (173 aa).

4 EF-hand domains span residues 20 to 55, 59 to 87, 89 to 124, and 130 to 165; these read DEID…AANP, RLMD…FSTK, NKKE…MVGN, and QLQQ…TNVY. Ca(2+) is bound by residues D33, D35, S37, E44, D65, N67, S69, D71, E76, D102, D104, D106, Y108, E113, D143, D145, D147, K149, and E154.

This sequence belongs to the calcineurin regulatory subunit family. As to quaternary structure, composed of a catalytic subunit (A) and a regulatory subunit (B).

In terms of biological role, regulatory subunit of calcineurin, a calcium-dependent, calmodulin stimulated protein phosphatase. Confers calcium sensitivity. The sequence is that of Calcineurin subunit B (CNB1) from Yarrowia lipolytica (strain CLIB 122 / E 150) (Yeast).